An 858-amino-acid chain; its full sequence is Leucine--tRNA ligase (858 aa).

Residues 42-52 (PYPSGNLHMGH) carry the 'HIGH' region motif. Positions 584–594 (NPNRSDSSRYI) are enriched in polar residues. Residues 584–611 (NPNRSDSSRYIPSNLVDPNDPKDPETGE) are disordered. Positions 619–623 (TMSKS) match the 'KMSKS' region motif. Residue Lys622 coordinates ATP.

This sequence belongs to the class-I aminoacyl-tRNA synthetase family.

It is found in the cytoplasm. It catalyses the reaction tRNA(Leu) + L-leucine + ATP = L-leucyl-tRNA(Leu) + AMP + diphosphate. The chain is Leucine--tRNA ligase from Cyanothece sp. (strain PCC 7425 / ATCC 29141).